The following is a 392-amino-acid chain: Small ribosomal subunit protein bS1 (392 aa).

4 consecutive S1 motif domains span residues 16–90 (GDKV…LSKR), 108–173 (DEII…LSRK), 194–262 (GDVI…LSIK), and 279–348 (DDVI…LSIK).

It belongs to the bacterial ribosomal protein bS1 family.

In terms of biological role, binds mRNA; thus facilitating recognition of the initiation point. It is needed to translate mRNA with a short Shine-Dalgarno (SD) purine-rich sequence. In Staphylococcus haemolyticus (strain JCSC1435), this protein is Small ribosomal subunit protein bS1 (rpsA).